A 628-amino-acid chain; its full sequence is Kelch-like protein 14 (628 aa).

Residues 33–151 (CDVTLTAQGQ…LYTANVTLSL (119 aa)) enclose the BTB domain. The disordered stretch occupies residues 69–115 (GGGVGGQDGLGAPKDQQQPPQQQPSQQQQPPPQEEPGTPSSSPDDKL). Over residues 84 to 96 (QQQPPQQQPSQQQ) the composition is skewed to low complexity. One can recognise a BACK domain in the interval 210–279 (VEDVLLLNFE…PAPELVERVQ (70 aa)). 6 Kelch repeats span residues 323–372 (MLLL…EVEN), 373–424 (FLFV…RLDK), 425–471 (HLYV…VHNG), 473–518 (IYIS…VMND), 520–570 (LYAI…VLDD), and 572–620 (IYLV…TVIL).

In terms of assembly, interacts with TOR1A, preferentially with the ATP-free form.

The protein localises to the cytoplasm. It localises to the cytosol. It is found in the endoplasmic reticulum membrane. The sequence is that of Kelch-like protein 14 (KLHL14) from Homo sapiens (Human).